We begin with the raw amino-acid sequence, 406 residues long: Acetate kinase (406 aa).

Asn7 lines the Mg(2+) pocket. Residue Lys14 coordinates ATP. Substrate is bound at residue Arg90. Asp147 acts as the Proton donor/acceptor in catalysis. ATP is bound by residues His207 to Gly211, Asp283 to Arg285, and Gly331 to Asn335. Glu385 provides a ligand contact to Mg(2+).

It belongs to the acetokinase family. In terms of assembly, homodimer. Mg(2+) is required as a cofactor. The cofactor is Mn(2+).

The protein resides in the cytoplasm. The catalysed reaction is acetate + ATP = acetyl phosphate + ADP. Its pathway is metabolic intermediate biosynthesis; acetyl-CoA biosynthesis; acetyl-CoA from acetate: step 1/2. Functionally, catalyzes the formation of acetyl phosphate from acetate and ATP. Can also catalyze the reverse reaction. This Thermosipho africanus (strain TCF52B) protein is Acetate kinase.